We begin with the raw amino-acid sequence, 280 residues long: Formyltetrahydrofolate deformylase (280 aa).

The ACT domain maps to 8-86; sequence VLRTICPDQK…RELNPAGRRR (79 aa). The active site involves Asp225.

It belongs to the PurU family.

It carries out the reaction (6R)-10-formyltetrahydrofolate + H2O = (6S)-5,6,7,8-tetrahydrofolate + formate + H(+). It participates in purine metabolism; IMP biosynthesis via de novo pathway; formate from 10-formyl-5,6,7,8-tetrahydrofolate: step 1/1. Its function is as follows. Catalyzes the hydrolysis of 10-formyltetrahydrofolate (formyl-FH4) to formate and tetrahydrofolate (FH4). This is Formyltetrahydrofolate deformylase from Escherichia coli O6:H1 (strain CFT073 / ATCC 700928 / UPEC).